A 308-amino-acid polypeptide reads, in one-letter code: Alpha/beta hydrolase domain-containing protein WAV2 (308 aa).

A helical membrane pass occupies residues 6–26 (SALFYGFGGIVVAGVALLVAF). Catalysis depends on charge relay system residues serine 159, aspartate 243, and arginine 308.

The protein belongs to the serine esterase family. In terms of tissue distribution, expressed in roots, rosette leaves, stems and flowers.

Its subcellular location is the cell membrane. Involved in the regulation of root growth. Involved in the suppression of the root bending in response to touch stimuli, gravity and light. Negatively regulates stimulus-induced root bending through inhibition of root tip rotation. The polypeptide is Alpha/beta hydrolase domain-containing protein WAV2 (Arabidopsis thaliana (Mouse-ear cress)).